A 260-amino-acid chain; its full sequence is Hemin import ATP-binding protein HmuV (260 aa).

An ABC transporter domain is found at 6–242; the sequence is LHADNLHYRA…VQLRACYQAD (237 aa). 38 to 45 is a binding site for ATP; the sequence is GPNGAGKS.

This sequence belongs to the ABC transporter superfamily. Heme (hemin) importer (TC 3.A.1.14.5) family. In terms of assembly, the complex is composed of two ATP-binding proteins (HmuV), two transmembrane proteins (HmuU) and a solute-binding protein (HmuT).

It is found in the cell inner membrane. Its function is as follows. Part of the ABC transporter complex HmuTUV involved in hemin import. Responsible for energy coupling to the transport system. The sequence is that of Hemin import ATP-binding protein HmuV from Sodalis glossinidius (strain morsitans).